We begin with the raw amino-acid sequence, 272 residues long: Tryptophan synthase alpha chain (272 aa).

Residues Glu53 and Asp64 each act as proton acceptor in the active site.

The protein belongs to the TrpA family. Tetramer of two alpha and two beta chains.

It carries out the reaction (1S,2R)-1-C-(indol-3-yl)glycerol 3-phosphate + L-serine = D-glyceraldehyde 3-phosphate + L-tryptophan + H2O. Its pathway is amino-acid biosynthesis; L-tryptophan biosynthesis; L-tryptophan from chorismate: step 5/5. The alpha subunit is responsible for the aldol cleavage of indoleglycerol phosphate to indole and glyceraldehyde 3-phosphate. In Xanthomonas campestris pv. campestris (strain 8004), this protein is Tryptophan synthase alpha chain.